We begin with the raw amino-acid sequence, 510 residues long: D-alanine--D-alanyl carrier protein ligase (510 aa).

157-158 (TS) contacts ATP. Residue D202 participates in D-alanine binding. 297–302 (NTYGPT) is a binding site for ATP. V306 is a binding site for D-alanine. ATP-binding residues include D389 and K498. D-alanine is bound at residue K498.

The protein belongs to the ATP-dependent AMP-binding enzyme family. DltA subfamily.

It is found in the cytoplasm. It carries out the reaction holo-[D-alanyl-carrier protein] + D-alanine + ATP = D-alanyl-[D-alanyl-carrier protein] + AMP + diphosphate. It participates in cell wall biogenesis; lipoteichoic acid biosynthesis. In terms of biological role, catalyzes the first step in the D-alanylation of lipoteichoic acid (LTA), the activation of D-alanine and its transfer onto the D-alanyl carrier protein (Dcp) DltC. In an ATP-dependent two-step reaction, forms a high energy D-alanyl-AMP intermediate, followed by transfer of the D-alanyl residue as a thiol ester to the phosphopantheinyl prosthetic group of the Dcp. D-alanylation of LTA plays an important role in modulating the properties of the cell wall in Gram-positive bacteria, influencing the net charge of the cell wall. This is D-alanine--D-alanyl carrier protein ligase from Listeria monocytogenes serotype 4b (strain F2365).